The primary structure comprises 166 residues: Deglycase PH1704 (166 aa).

The PfpI endopeptidase domain maps to 1–166; the sequence is MKVLFLTANE…WMREFVKLLK (166 aa). Cys100 serves as the catalytic Nucleophile. Residue His101 is part of the active site.

Belongs to the peptidase C56 family. In terms of assembly, homohexamer formed by a dimer of trimers that assemble into a hollow ring structure.

The protein localises to the cytoplasm. The enzyme catalyses N(omega)-(1-hydroxy-2-oxopropyl)-L-arginyl-[protein] + H2O = lactate + L-arginyl-[protein] + H(+). It catalyses the reaction N(6)-(1-hydroxy-2-oxopropyl)-L-lysyl-[protein] + H2O = lactate + L-lysyl-[protein] + H(+). The catalysed reaction is S-(1-hydroxy-2-oxopropyl)-L-cysteinyl-[protein] + H2O = lactate + L-cysteinyl-[protein] + H(+). It carries out the reaction N(omega)-(1-hydroxy-2-oxoethyl)-L-arginyl-[protein] + H2O = L-arginyl-[protein] + glycolate + H(+). The enzyme catalyses N(6)-(1-hydroxy-2-oxoethyl)-L-lysyl-[protein] + H2O = glycolate + L-lysyl-[protein] + H(+). It catalyses the reaction S-(1-hydroxy-2-oxoethyl)-L-cysteinyl-[protein] + H2O = glycolate + L-cysteinyl-[protein] + H(+). Functionally, deglycase that catalyzes the deglycation of the Maillard adducts formed between amino groups of proteins and reactive carbonyl groups of glyoxals. Thus, functions as a protein deglycase that repairs methylglyoxal- and glyoxal-glycated proteins, and releases repaired proteins and lactate or glycolate, respectively. Deglycates cysteine, arginine and lysine residues in proteins, and thus reactivates these proteins by reversing glycation by glyoxals. Acts on early glycation intermediates (hemithioacetals and aminocarbinols), preventing the formation of advanced glycation endproducts (AGE) that cause irreversible damage. Also displays proteolytic activity. This Pyrococcus horikoshii (strain ATCC 700860 / DSM 12428 / JCM 9974 / NBRC 100139 / OT-3) protein is Deglycase PH1704.